Here is a 150-residue protein sequence, read N- to C-terminus: Large ribosomal subunit protein bL9 (150 aa).

The protein belongs to the bacterial ribosomal protein bL9 family.

Functionally, binds to the 23S rRNA. The chain is Large ribosomal subunit protein bL9 from Streptococcus pyogenes serotype M6 (strain ATCC BAA-946 / MGAS10394).